Consider the following 213-residue polypeptide: Phosphoribosyl-dephospho-CoA transferase (213 aa).

Catalysis depends on residues D135 and D137.

This sequence belongs to the MdcG family.

The catalysed reaction is apo-[malonate decarboxylase ACP] + 2'-(5''-triphospho-alpha-D-ribosyl)-3'-dephospho-CoA = holo-[malonate decarboxylase ACP] + diphosphate. Its function is as follows. Transfers 2'-(5-triphosphoribosyl)-3'-dephosphocoenzyme-A to the apo-[acyl-carrier-protein] of the malonate decarboxylase to yield holo-[acyl-carrier-protein]. This is Phosphoribosyl-dephospho-CoA transferase from Xanthomonas campestris pv. campestris (strain ATCC 33913 / DSM 3586 / NCPPB 528 / LMG 568 / P 25).